Consider the following 904-residue polypeptide: Polycystin-2 (904 aa).

The tract at residues 1–102 is disordered; the sequence is MSSSRVRPQA…SSSGGVPGNF (102 aa). At 1–155 the chain is on the cytoplasmic side; sequence MSSSRVRPQA…NSNREMYLKT (155 aa). A compositionally biased stretch (low complexity) spans 8-20; that stretch reads PQAPQSPAASASA. The segment covering 26–38 has biased composition (basic and acidic residues); the sequence is EGIEMEKMHHEEV. Over residues 86–96 the composition is skewed to low complexity; that stretch reads SVSTTSSSSSG. A helical membrane pass occupies residues 156 to 177; the sequence is VLREMITYILFLLTLCIITYGM. Residues 178-404 lie on the Extracellular side of the membrane; the sequence is VSTNMYYYTK…TVRLLRYVSS (227 aa). N-linked (GlcNAc...) asparagine glycosylation is found at N235, N241, and N264. A disulfide bridge links C267 with C280. N-linked (GlcNAc...) asparagine glycosylation occurs at N298. A helical transmembrane segment spans residues 405–425; sequence WDYFVGMCEVSFCLFVLYYLV. At 426–441 the chain is on the cytoplasmic side; that stretch reads EEALEIRLHRLRYFKS. A helical membrane pass occupies residues 442–462; that stretch reads LWNCLDVLIVALSVPAIIMNI. Over 463-489 the chain is Extracellular; that stretch reads CRTSAVSHRLHFLLENHSTYPNFEPLA. N-linked (GlcNAc...) asparagine glycosylation occurs at N478. The helical transmembrane segment at 490 to 510 threads the bilayer; that stretch reads RLQVHFNNLAAIIVFLSWVKL. The Cytoplasmic portion of the chain corresponds to 511-534; sequence FKFINFNKTMNQLSTTMSRCAKDL. The helical transmembrane segment at 535–556 threads the bilayer; the sequence is MGFAIMFFIVFLAYAQLAYLVF. Residues 557 to 568 lie on the Extracellular side of the membrane; the sequence is GTQVNDFSTFQA. An intramembrane region (pore-forming) is located at residues 569–583; sequence CIFTQFRIILGDFDF. L578 contacts Ca(2+). The short motif at 578–580 is the Selectivity filter element; that stretch reads LGD. The Extracellular segment spans residues 584-591; that stretch reads SEIEEADS. The chain crosses the membrane as a helical span at residues 592-612; sequence VLGPIYFTTFVFFIFMILLNM. Over 613–904 the chain is Cytoplasmic; sequence FLAIINDTYS…DAAASGPAHL (292 aa). In terms of domain architecture, EF-hand 1 spans 687 to 722; the sequence is HSDAEIEAIFAKYDLDGDQELTEHEHQQMRDDLEKE. Ca(2+)-binding residues include D700, D702, D704, E706, and E711. Residues 708–732 show a composition bias toward basic and acidic residues; it reads TEHEHQQMRDDLEKEREDLDLEHSS. 2 disordered regions span residues 708 to 770 and 854 to 904; these read TEHE…SSGG and ESDD…PAHL. A linker region spans residues 740-759; that stretch reads RSFSRSQDDSEEDDDEDSGH. In terms of domain architecture, EF-hand 2 spans 768–786; that stretch reads SGGVSYEEFQVLVRRVDRM. The stretch at 770–809 forms a coiled coil; sequence GVSYEEFQVLVRRVDRMEHSIGSIVSKIDAVIVKLEAMER. Residues 878–890 show a composition bias toward low complexity; that stretch reads LRPRSSRPPSSLS.

The protein belongs to the polycystin family. In terms of assembly, homotetramer. Component of the heterotetrameric polycystin channel complex with pkd1; the tetramer contains one pkd1 chain and three pkd2 chains. Interacts with pkd1l1. In terms of processing, phosphorylated. Phosphorylation is important for protein function; a mutant human construct that lacks the N-terminal phosphorylation sites cannot complement a zebrafish pkd2-deficient mutant. N-glycosylated. The four subunits in a tetramer probably differ in the extent of glycosylation; simultaneous glycosylation of all experimentally validated sites would probably create steric hindrance. Post-translationally, sumoylated by SUMO1; sumoylation regulates PKD2 membrane recycling. As to expression, detected along cilia and at the cilium basal body in Kupffer's vesicle at the 10 somite stage. Detected in heart at 48hpf. Detected in muscle and pronephric kidney at 48 hpf. Detected on trunk muscle sarcolemma and sarcomere, on ependymal cell cilia in brain, at the apical cell membrane in epithelial cells in the ear, at the lateral line organ and olfactory placode at 56 hpf. Detected in adult kidney (at protein level).

It is found in the basolateral cell membrane. Its subcellular location is the cell membrane. The protein localises to the sarcolemma. The protein resides in the cytoplasm. It localises to the myofibril. It is found in the sarcomere. Its subcellular location is the sarcoplasmic reticulum membrane. The protein localises to the apical cell membrane. The protein resides in the endoplasmic reticulum membrane. It localises to the cell projection. It is found in the cilium. Its subcellular location is the cytoskeleton. The protein localises to the cilium basal body. The protein resides in the cytoplasmic vesicle membrane. The enzyme catalyses K(+)(in) = K(+)(out). The catalysed reaction is Na(+)(in) = Na(+)(out). It carries out the reaction Ca(2+)(in) = Ca(2+)(out). With respect to regulation, channel activity is regulated by phosphorylation. Channel activity is regulated by intracellular Ca(2+). Forms a nonselective cation channel. Can function as a homotetrameric ion channel or can form heteromer with PKD1. Displays distinct function depending on its subcellular localization and regulation by its binding partners. In the primary cilium functions as a cation channel, with a preference for monovalent cations over divalent cations that allows K(+), Na(+) and Ca(2+) influx, with low selectivity for Ca(2+). In the endoplasmic reticulum, likely functions as a K(+) channel to facilitate Ca(2+) release. Required for normal oscillation of Ca(2+) levels within cilia; these oscillations of the intraciliary Ca(2+) levels can trigger cytoplasmic Ca(2+) signaling cascades. Required for normal temporal variation of the intracellular Ca(2+) levels in the heart. Plays a role in fluid-flow mechanosensation. Required for normal specification of the body left-right axis during embryogenesis, most likely via its role in ciliary Ca(2+) oscillations in Kupffer's vesicle. This chain is Polycystin-2, found in Danio rerio (Zebrafish).